Here is a 669-residue protein sequence, read N- to C-terminus: Serine/threonine-protein kinase hippo (669 aa).

Phosphoserine occurs at positions 30 and 33. In terms of domain architecture, Protein kinase spans 42 to 293 (FDIMYKLGEG…ATELLEHEFI (252 aa)). ATP contacts are provided by residues 48–56 (LGEGSYGSV) and K71. The active-site Proton acceptor is the D161. T195 is subject to Phosphothreonine; by Tao. Positions 432 to 445 (MVINSDSDDSTTAK) are enriched in polar residues. Residues 432-508 (MVINSDSDDS…QQQQQDEQHL (77 aa)) form a disordered region. Residues 460–479 (FLEHFDRKNAGDGRGDEKPI) show a composition bias toward basic and acidic residues. A compositionally biased stretch (low complexity) spans 490-503 (QQQQQQQQQQQQQQ). Positions 608–655 (FEFLKFLTFDDLNQRLCNIDHEMELEIEQLNKKYNAKRQPIVDAMNAK) constitute an SARAH domain.

This sequence belongs to the protein kinase superfamily. STE Ser/Thr protein kinase family. STE20 subfamily. In terms of assembly, homodimer. Interacts with Sav and Wts. Interacts (via SARAH domain) with Ex. Interacts with Kibra. In terms of processing, autophosphorylated. Expressed in CNS during embryogenesis. In third instar larvae, it is expressed throughout all imaginal disks.

The protein resides in the apical cell membrane. The protein localises to the cytoplasm. It catalyses the reaction L-seryl-[protein] + ATP = O-phospho-L-seryl-[protein] + ADP + H(+). The enzyme catalyses L-threonyl-[protein] + ATP = O-phospho-L-threonyl-[protein] + ADP + H(+). Plays a key role in the Hippo/SWH (Sav/Wts/Hpo) signaling pathway, a signaling pathway that plays a pivotal role in organ size control and tumor suppression by restricting proliferation and promoting apoptosis. The core of this pathway is composed of a kinase cascade wherein Hippo (Hpo), in complex with its regulatory protein Salvador (Sav), phosphorylates and activates Warts (Wts) in complex with its regulatory protein Mats, which in turn phosphorylates and inactivates the Yorkie (Yki) oncoprotein. The Hippo/SWH signaling pathway inhibits the activity of the transcriptional complex formed by Scalloped (sd) and Yki and the target genes of this pathway include cyclin-E (cycE), diap1 and bantam. Phosphorylates Sav, Wts and Th/DIAP1. Regulates the level of Th/DIAP1 apoptosis inhibitor. The sequence is that of Serine/threonine-protein kinase hippo (hpo) from Drosophila melanogaster (Fruit fly).